We begin with the raw amino-acid sequence, 146 residues long: MADLDAVLKCWGAVEADFNTVGGLVLARLFKDHPETQKLFPKFAGITGDIAGNAAVAAHGATVLKKLGELLKAKGNHAAIIKPLANSHAKQHKIPINNFKLITEALAHVLHEKAGLDAAGQTALRNVMGIVIADLEANYKELGFTG.

Positions 2 to 140 constitute a Globin domain; that stretch reads ADLDAVLKCW…VIADLEANYK (139 aa). H59 is a binding site for nitrite. H59 provides a ligand contact to O2. Residue H88 coordinates heme b.

This sequence belongs to the globin family. As to quaternary structure, monomeric.

The protein localises to the cytoplasm. It localises to the sarcoplasm. The catalysed reaction is Fe(III)-heme b-[protein] + nitric oxide + H2O = Fe(II)-heme b-[protein] + nitrite + 2 H(+). It carries out the reaction H2O2 + AH2 = A + 2 H2O. In terms of biological role, monomeric heme protein which primary function is to store oxygen and facilitate its diffusion within muscle tissues. Reversibly binds oxygen through a pentacoordinated heme iron and enables its timely and efficient release as needed during periods of heightened demand. Depending on the oxidative conditions of tissues and cells, and in addition to its ability to bind oxygen, it also has a nitrite reductase activity whereby it regulates the production of bioactive nitric oxide. Under stress conditions, like hypoxia and anoxia, it also protects cells against reactive oxygen species thanks to its pseudoperoxidase activity. The chain is Myoglobin (mb) from Katsuwonus pelamis (Skipjack tuna).